A 189-amino-acid chain; its full sequence is ComE operon protein 2 (189 aa).

A CMP/dCMP-type deaminase domain is found at 5–132; sequence SWNQYFMAQS…PYAQELFEQA (128 aa). H70 contributes to the Zn(2+) binding site. The Proton donor role is filled by E72. Residues C98 and C101 each coordinate Zn(2+).

The protein belongs to the cytidine and deoxycytidylate deaminase family. The cofactor is Zn(2+).

Its function is as follows. Dispensable for transformability. The protein is ComE operon protein 2 (comEB) of Bacillus subtilis (strain 168).